Reading from the N-terminus, the 167-residue chain is Protein MIX23 (167 aa).

Positions 81–108 are disordered; that stretch reads QLDQDRNTSKSPLKSQQQLPSSSTTQVS. Low complexity predominate over residues 89–106; it reads SKSPLKSQQQLPSSSTTQ.

This sequence belongs to the MIX23 family.

The polypeptide is Protein MIX23 (cid2) (Schizosaccharomyces pombe (strain 972 / ATCC 24843) (Fission yeast)).